The sequence spans 465 residues: Hexokinase-4 (465 aa).

In terms of domain architecture, Hexokinase spans Ala10–Ala454. A hexokinase small subdomain region spans residues Glu67 to Val203. Asp78–Asn83 is an ATP binding site. Residues Ser151 to Phe152, Thr168 to Lys169, and Asn204 to Asp205 contribute to the substrate site. Positions Asn204–Glu443 are hexokinase large subdomain. An ATP-binding site is contributed by Thr228. Residues Asn231, Glu256, and Glu290 each coordinate substrate. Residues Gly295–Lys296, Thr332–Ser336, and Ser411–Leu415 contribute to the ATP site.

It belongs to the hexokinase family. As to quaternary structure, monomer. Interacts with MIDN; the interaction occurs preferentially at low glucose levels and results in inhibition of hexokinase activity. Interacts with GCKR; leading to sequestration in the nucleus.

The protein resides in the cytoplasm. It is found in the nucleus. Its subcellular location is the mitochondrion. It carries out the reaction a D-hexose + ATP = a D-hexose 6-phosphate + ADP + H(+). It catalyses the reaction D-fructose + ATP = D-fructose 6-phosphate + ADP + H(+). The enzyme catalyses D-glucose + ATP = D-glucose 6-phosphate + ADP + H(+). The catalysed reaction is D-mannose + ATP = D-mannose 6-phosphate + ADP + H(+). The protein operates within carbohydrate metabolism; hexose metabolism. Its pathway is carbohydrate degradation; glycolysis; D-glyceraldehyde 3-phosphate and glycerone phosphate from D-glucose: step 1/4. With respect to regulation, subject to allosteric regulation. Low glucose and high fructose-6-phosphate triggers association with the inhibitor GCKR followed by sequestration in the nucleus. Functionally, catalyzes the phosphorylation of hexose, such as D-glucose, D-fructose and D-mannose, to hexose 6-phosphate (D-glucose 6-phosphate, D-fructose 6-phosphate and D-mannose 6-phosphate, respectively). Compared to other hexokinases, has a weak affinity for D-glucose, and is effective only when glucose is abundant. Mainly expressed in pancreatic beta cells and the liver and constitutes a rate-limiting step in glucose metabolism in these tissues. Since insulin secretion parallels glucose metabolism and the low glucose affinity of GCK ensures that it can change its enzymatic activity within the physiological range of glucose concentrations, GCK acts as a glucose sensor in the pancreatic beta cell. In pancreas, plays an important role in modulating insulin secretion. In liver, helps to facilitate the uptake and conversion of glucose by acting as an insulin-sensitive determinant of hepatic glucose usage. Required to provide D-glucose 6-phosphate for the synthesis of glycogen. Mediates the initial step of glycolysis by catalyzing phosphorylation of D-glucose to D-glucose 6-phosphate. The polypeptide is Hexokinase-4 (Homo sapiens (Human)).